The following is a 585-amino-acid chain: MELLTFRDVAIEFSPEEWKCLDPAQQNLYRDVMLENYRNLISLGVAISNPDLVIYLEQRKEPYKVKIHETVAKHPAVCSHFTQDFLPVQGIEDSFHKLILRRYEKCGHENLELRKSCKRKVQKGGYNEFNQCLSTIQSKIFQCNVHVKVFSTFSNSNQRRIRHTGEKHFKECGKSFQKFSDLTQHQGIHAGEKPYTCEECGKDFKWYLIFNEYEIIHTGEKPFTCEECGNIFTTSSNFAKHKVHTGEKSYKYEECGKAFNRSSTLTKHKRIHAEEKPFTCEECGKIITSSSNVAKHKKIHTGEKLYKCQECGKVFNRSTTLTKHNRIHTGEKPYTCEECGKAFSRSSVLNEHKRIHTGEKPYKCEQCGKAFRQSATLNKHKSIHTGEKPYTCEECGKAFSRFTTLNEHKRIHTGERPHKCEECGKAFGWSTDLNKHKIIHTGEKPYKCEECGKAFGWSAYLSKHKKIHTGEKPYRCEECGKAFLCSRALNKHKTIHTGEKPYECEECGKAFGWSTYLSKHKKIHTGEKPYRCEECGKAFRRSRVLNKYKTIHTGDKTPKCKGCGKAFKWSSYLNQHNKIYTGEKL.

A KRAB domain is found at 4–75; sequence LTFRDVAIEF…KIHETVAKHP (72 aa). Residues 141–163 form a C2H2-type 1; degenerate zinc finger; sequence FQCNVHVKVFSTFSNSNQRRIRH. The segment at 167-189 adopts a C2H2-type 2; degenerate zinc-finger fold; it reads KHFKECGKSFQKFSDLTQHQGIH. The segment at 195-217 adopts a C2H2-type 3; degenerate zinc-finger fold; the sequence is YTCEECGKDFKWYLIFNEYEIIH. The C2H2-type 4 zinc finger occupies 223-244; the sequence is FTCEECGNIFTTSSNFAKHKVH. The segment at 250 to 272 adopts a C2H2-type 5; degenerate zinc-finger fold; the sequence is YKYEECGKAFNRSSTLTKHKRIH. 9 C2H2-type zinc fingers span residues 278-300, 306-328, 334-356, 362-384, 390-412, 418-440, 446-468, 474-496, and 502-524; these read FTCE…KKIH, YKCQ…NRIH, YTCE…KRIH, YKCE…KSIH, HKCE…KIIH, YKCE…KKIH, YRCE…KTIH, and YECE…KKIH. The C2H2-type 15; degenerate zinc-finger motif lies at 530–552; that stretch reads YRCEECGKAFRRSRVLNKYKTIH. Residues 558–580 form a C2H2-type 16; degenerate zinc finger; it reads PKCKGCGKAFKWSSYLNQHNKIY.

It belongs to the krueppel C2H2-type zinc-finger protein family.

It localises to the nucleus. Its function is as follows. May be involved in transcriptional regulation. In Homo sapiens (Human), this protein is Zinc finger protein 732 (ZNF732).